Reading from the N-terminus, the 330-residue chain is D-lactate dehydrogenase (330 aa).

Residues 155–156 (RI), D175, 206–207 (MP), N212, 233–235 (MAR), and D259 each bind NAD(+). Residue R235 is part of the active site. The active site involves E264. Residue H296 is the Proton donor of the active site.

The protein belongs to the D-isomer specific 2-hydroxyacid dehydrogenase family.

The enzyme catalyses (R)-lactate + NAD(+) = pyruvate + NADH + H(+). The sequence is that of D-lactate dehydrogenase (ldhD) from Streptococcus agalactiae serotype V (strain ATCC BAA-611 / 2603 V/R).